The chain runs to 157 residues: Small heat shock protein ibp (157 aa).

The region spanning 35 to 148 (EKPISDTPTY…KPKKISINVP (114 aa)) is the sHSP domain.

It belongs to the small heat shock protein (HSP20) family.

In Buchnera aphidicola subsp. Acyrthosiphon pisum (strain APS) (Acyrthosiphon pisum symbiotic bacterium), this protein is Small heat shock protein ibp (ibp).